The sequence spans 431 residues: Probable ganciclovir kinase (431 aa).

The Protein kinase domain occupies 79-368 (PQEDAVLGSG…KLSIGIDSFG (290 aa)). ATP-binding positions include 85 to 93 (LGSGSFGSV) and Lys-103. The active-site Proton acceptor is the Asp-195.

The protein belongs to the protein kinase superfamily. Tyr protein kinase family. HCMV ganciclovir subfamily.

In terms of biological role, phosphorylates the antiviral nucleoside analog ganciclovir. This Saimiriine herpesvirus 2 (strain 11) (SaHV-2) protein is Probable ganciclovir kinase (36).